A 485-amino-acid polypeptide reads, in one-letter code: GTPase Obg (485 aa).

One can recognise an Obg domain in the interval 2–159 (PRFVDRVVIH…RELTLELKTV (158 aa)). The OBG-type G domain maps to 160–341 (ADVGLIGFPS…FIFALWDMVR (182 aa)). GTP is bound by residues 166–173 (GFPSAGKS), 191–195 (FTTLV), 212–215 (DVPG), 292–295 (NKID), and 322–324 (STV). Mg(2+)-binding residues include S173 and T193. The region spanning 359 to 437 (PIAVDETGFS…IGDMTFDWEP (79 aa)) is the OCT domain. The segment at 439–485 (TPAGVDVQMSGRGTDTRLEQTDRVSAAERKIARRERRQSTDEPGGEE) is disordered. Positions 452-468 (TDTRLEQTDRVSAAERK) are enriched in basic and acidic residues.

The protein belongs to the TRAFAC class OBG-HflX-like GTPase superfamily. OBG GTPase family. Monomer. Requires Mg(2+) as cofactor.

It localises to the cytoplasm. Functionally, an essential GTPase which binds GTP, GDP and possibly (p)ppGpp with moderate affinity, with high nucleotide exchange rates and a fairly low GTP hydrolysis rate. Plays a role in control of the cell cycle, stress response, ribosome biogenesis and in those bacteria that undergo differentiation, in morphogenesis control. This chain is GTPase Obg, found in Mycobacterium sp. (strain MCS).